A 1341-amino-acid chain; its full sequence is Pleckstrin homology domain-containing family G member 3 (1341 aa).

The segment at 1-68 (MPVSTALHQD…PNSNNNSSGW (68 aa)) is disordered. A compositionally biased stretch (low complexity) spans 18–29 (SLVSTTSSSGSS). 2 stretches are compositionally biased toward polar residues: residues 42–51 (SEASAQNGTG) and 59–68 (PNSNNNSSGW). A Phosphoserine modification is found at Ser76. Positions 93–272 (YLGRVVREIV…TCVAWYINDM (180 aa)) constitute a DH domain. Residues 296 to 394 (DLTTYGELVL…WTHHIKRLIL (99 aa)) enclose the PH domain. Ser433 and Ser502 each carry phosphoserine. The disordered stretch occupies residues 433–482 (SQDEVSSHVRQGRRQSEPGHTLFSRATLPSRQQGFEMPGLKGRRKSEPTR). Disordered stretches follow at residues 508 to 657 (DFGQ…EFPE) and 684 to 715 (PEGS…LLPP). Composition is skewed to acidic residues over residues 529 to 541 (ELEE…EEEE) and 570 to 580 (GSEEEEEEEES). 7 positions are modified to phosphoserine: Ser571, Ser694, Ser695, Ser737, Ser759, Ser762, and Ser766. Positions 695 to 707 (SEEEEEEEMEAAQ) are enriched in acidic residues. The segment at 775–832 (SIGDSLSNPPTPEVIIGADMVTDNGPSVNGTESPSAGSGCPTEQDRSSCKKKESALST) is disordered. Residues 798–810 (NGPSVNGTESPSA) are compositionally biased toward polar residues. Residues 817-832 (EQDRSSCKKKESALST) show a composition bias toward basic and acidic residues. A phosphoserine mark is found at Ser862, Ser899, Ser900, and Ser947. Disordered regions lie at residues 876–930 (SRFN…EFCP), 939–958 (ERME…SQAN), 1071–1097 (KVTP…SGGK), and 1117–1162 (HGTS…PFDT). Residues 939-948 (ERMESSERSP) are compositionally biased toward basic and acidic residues. Residues 949 to 958 (RTGSGQSQAN) are compositionally biased toward polar residues. 7 positions are modified to phosphoserine: Ser1129, Ser1134, Ser1136, Ser1141, Ser1155, Ser1158, and Ser1201. Residues 1135-1162 (FSPSAVSPRTTSPGARSSARSPLSPFDT) are compositionally biased toward polar residues. Disordered stretches follow at residues 1204–1249 (ENIV…LNGG) and 1271–1341 (KGPH…NSVG). The segment covering 1309 to 1320 (QPKEHGPRDSAD) has biased composition (basic and acidic residues).

The protein localises to the cytoplasm. Its subcellular location is the cytoskeleton. Functionally, plays a role in controlling cell polarity and cell motility by selectively binding newly polymerized actin and activating RAC1 and CDC42 to enhance local actin polymerization. This is Pleckstrin homology domain-containing family G member 3 from Mus musculus (Mouse).